Consider the following 339-residue polypeptide: Glycerol-3-phosphate dehydrogenase [NAD(P)+] (339 aa).

4 residues coordinate NADPH: serine 15, tyrosine 16, histidine 36, and lysine 110. 3 residues coordinate sn-glycerol 3-phosphate: lysine 110, glycine 139, and threonine 141. Alanine 143 lines the NADPH pocket. Sn-glycerol 3-phosphate-binding residues include lysine 195, aspartate 248, serine 258, arginine 259, and asparagine 260. Lysine 195 acts as the Proton acceptor in catalysis. Arginine 259 serves as a coordination point for NADPH. NADPH contacts are provided by valine 283 and glutamate 285.

The protein belongs to the NAD-dependent glycerol-3-phosphate dehydrogenase family.

The protein resides in the cytoplasm. It catalyses the reaction sn-glycerol 3-phosphate + NAD(+) = dihydroxyacetone phosphate + NADH + H(+). The enzyme catalyses sn-glycerol 3-phosphate + NADP(+) = dihydroxyacetone phosphate + NADPH + H(+). Its pathway is membrane lipid metabolism; glycerophospholipid metabolism. Catalyzes the reduction of the glycolytic intermediate dihydroxyacetone phosphate (DHAP) to sn-glycerol 3-phosphate (G3P), the key precursor for phospholipid synthesis. The chain is Glycerol-3-phosphate dehydrogenase [NAD(P)+] from Pectobacterium carotovorum subsp. carotovorum (strain PC1).